Reading from the N-terminus, the 361-residue chain is Phospho-N-acetylmuramoyl-pentapeptide-transferase (361 aa).

10 helical membrane-spanning segments follow: residues L28 to L48, T73 to L93, M98 to L118, Y132 to P152, W168 to S188, G199 to S219, G235 to W255, V263 to I283, I288 to V308, and K338 to L358.

This sequence belongs to the glycosyltransferase 4 family. MraY subfamily. It depends on Mg(2+) as a cofactor.

The protein localises to the cell inner membrane. It carries out the reaction UDP-N-acetyl-alpha-D-muramoyl-L-alanyl-gamma-D-glutamyl-meso-2,6-diaminopimeloyl-D-alanyl-D-alanine + di-trans,octa-cis-undecaprenyl phosphate = di-trans,octa-cis-undecaprenyl diphospho-N-acetyl-alpha-D-muramoyl-L-alanyl-D-glutamyl-meso-2,6-diaminopimeloyl-D-alanyl-D-alanine + UMP. It functions in the pathway cell wall biogenesis; peptidoglycan biosynthesis. Catalyzes the initial step of the lipid cycle reactions in the biosynthesis of the cell wall peptidoglycan: transfers peptidoglycan precursor phospho-MurNAc-pentapeptide from UDP-MurNAc-pentapeptide onto the lipid carrier undecaprenyl phosphate, yielding undecaprenyl-pyrophosphoryl-MurNAc-pentapeptide, known as lipid I. The polypeptide is Phospho-N-acetylmuramoyl-pentapeptide-transferase (Thermodesulfovibrio yellowstonii (strain ATCC 51303 / DSM 11347 / YP87)).